Here is a 206-residue protein sequence, read N- to C-terminus: LexA repressor (206 aa).

A DNA-binding region (H-T-H motif) is located at residues 28-48 (RAEIASELGFKSANAAEEHLK). Residues S122 and K160 each act as for autocatalytic cleavage activity in the active site.

The protein belongs to the peptidase S24 family. In terms of assembly, homodimer.

It catalyses the reaction Hydrolysis of Ala-|-Gly bond in repressor LexA.. Its function is as follows. Represses a number of genes involved in the response to DNA damage (SOS response), including recA and lexA. In the presence of single-stranded DNA, RecA interacts with LexA causing an autocatalytic cleavage which disrupts the DNA-binding part of LexA, leading to derepression of the SOS regulon and eventually DNA repair. The polypeptide is LexA repressor (Tolumonas auensis (strain DSM 9187 / NBRC 110442 / TA 4)).